Consider the following 321-residue polypeptide: Lipoyl synthase (321 aa).

The tract at residues 1–21 (MRHRWEDRPVAPPPDGRPTEY) is disordered. [4Fe-4S] cluster contacts are provided by cysteine 63, cysteine 68, cysteine 74, cysteine 89, cysteine 93, cysteine 96, and serine 302. Residues 75–291 (WNNRTATFMI…KKLGLEMGFS (217 aa)) form the Radical SAM core domain. The segment at 301 to 321 (SSYHAHEQTEDARRGALGARG) is disordered. Residues 304 to 314 (HAHEQTEDARR) show a composition bias toward basic and acidic residues.

The protein belongs to the radical SAM superfamily. Lipoyl synthase family. The cofactor is [4Fe-4S] cluster.

It is found in the cytoplasm. The enzyme catalyses [[Fe-S] cluster scaffold protein carrying a second [4Fe-4S](2+) cluster] + N(6)-octanoyl-L-lysyl-[protein] + 2 oxidized [2Fe-2S]-[ferredoxin] + 2 S-adenosyl-L-methionine + 4 H(+) = [[Fe-S] cluster scaffold protein] + N(6)-[(R)-dihydrolipoyl]-L-lysyl-[protein] + 4 Fe(3+) + 2 hydrogen sulfide + 2 5'-deoxyadenosine + 2 L-methionine + 2 reduced [2Fe-2S]-[ferredoxin]. It functions in the pathway protein modification; protein lipoylation via endogenous pathway; protein N(6)-(lipoyl)lysine from octanoyl-[acyl-carrier-protein]: step 2/2. Its function is as follows. Catalyzes the radical-mediated insertion of two sulfur atoms into the C-6 and C-8 positions of the octanoyl moiety bound to the lipoyl domains of lipoate-dependent enzymes, thereby converting the octanoylated domains into lipoylated derivatives. The chain is Lipoyl synthase from Rubrobacter xylanophilus (strain DSM 9941 / JCM 11954 / NBRC 16129 / PRD-1).